The following is a 183-amino-acid chain: NADH-quinone oxidoreductase subunit I (183 aa).

4Fe-4S ferredoxin-type domains follow at residues 44 to 74 and 90 to 119; these read LNRWPDGLEKCIGCELCAWACPADAIYVEAG and RVYQINYLRCILCGLCVEACPTRALTMTNE. [4Fe-4S] cluster-binding residues include Cys54, Cys57, Cys60, Cys64, Cys99, Cys102, Cys105, and Cys109. Residues 143-183 are disordered; that stretch reads QGMEAPPHPMRLGETEKDYYRLGRDDNAAARADEQNSEAVQ. Basic and acidic residues predominate over residues 153–176; that stretch reads RLGETEKDYYRLGRDDNAAARADE.

This sequence belongs to the complex I 23 kDa subunit family. As to quaternary structure, NDH-1 is composed of 14 different subunits. Subunits NuoA, H, J, K, L, M, N constitute the membrane sector of the complex. [4Fe-4S] cluster serves as cofactor.

The protein localises to the cell membrane. It catalyses the reaction a quinone + NADH + 5 H(+)(in) = a quinol + NAD(+) + 4 H(+)(out). In terms of biological role, NDH-1 shuttles electrons from NADH, via FMN and iron-sulfur (Fe-S) centers, to quinones in the respiratory chain. The immediate electron acceptor for the enzyme in this species is believed to be ubiquinone. Couples the redox reaction to proton translocation (for every two electrons transferred, four hydrogen ions are translocated across the cytoplasmic membrane), and thus conserves the redox energy in a proton gradient. The protein is NADH-quinone oxidoreductase subunit I of Thermobifida fusca (strain YX).